The sequence spans 491 residues: Carbohydrate ABC transporter substrate-binding protein (491 aa).

Positions 212, 247, 252, and 256 each coordinate Zn(2+).

This sequence belongs to the bacterial solute-binding protein 1 family. In terms of assembly, exists as a monomer, homodimer, homotrimer and homotetramer; oligomerization increases with higher protein concentration.

It localises to the cell surface. In terms of biological role, probably part of an ABC transporter complex involved in carbohydrate transport. The sequence is that of Carbohydrate ABC transporter substrate-binding protein from Streptococcus pneumoniae serotype 4 (strain ATCC BAA-334 / TIGR4).